The following is a 400-amino-acid chain: Acetate kinase (400 aa).

N10 contacts Mg(2+). K17 is a binding site for ATP. A substrate-binding site is contributed by R89. D148 acts as the Proton donor/acceptor in catalysis. ATP-binding positions include 208 to 212, 283 to 285, and 331 to 335; these read HLGNG, DCR, and GIGEN. Residue E385 participates in Mg(2+) binding.

Belongs to the acetokinase family. Homodimer. The cofactor is Mg(2+). Requires Mn(2+) as cofactor.

It is found in the cytoplasm. The catalysed reaction is acetate + ATP = acetyl phosphate + ADP. The protein operates within metabolic intermediate biosynthesis; acetyl-CoA biosynthesis; acetyl-CoA from acetate: step 1/2. Its function is as follows. Catalyzes the formation of acetyl phosphate from acetate and ATP. Can also catalyze the reverse reaction. The polypeptide is Acetate kinase (Haemophilus ducreyi (strain 35000HP / ATCC 700724)).